A 331-amino-acid chain; its full sequence is L-lactate dehydrogenase A chain (331 aa).

Residues 29 to 57 (GMVGMASAISILLKDLCDELAMVDVMEDK) and Arg98 each bind NAD(+). 3 residues coordinate substrate: Arg105, Asn137, and Arg168. Asn137 lines the NAD(+) pocket. Catalysis depends on His192, which acts as the Proton acceptor. Position 247 (Thr247) interacts with substrate.

Belongs to the LDH/MDH superfamily. LDH family. As to quaternary structure, homotetramer.

The protein localises to the cytoplasm. It catalyses the reaction (S)-lactate + NAD(+) = pyruvate + NADH + H(+). Its pathway is fermentation; pyruvate fermentation to lactate; (S)-lactate from pyruvate: step 1/1. Functionally, interconverts simultaneously and stereospecifically pyruvate and lactate with concomitant interconversion of NADH and NAD(+). In Dissostichus eleginoides (Patagonian toothfish), this protein is L-lactate dehydrogenase A chain (ldha).